The following is a 178-amino-acid chain: MRAYIFQDEGDQRKPNDSKIEVSAEDLEAAKVSYRHHDGDLHTFADGLMKEYGFKNRDEVVVSRKGLGDRYDNMVKKFFEEHLHEDEEIRLILDGNGYFDVRSVDDRWVRIFVEKGDLIILPPGIYHRFTTTTDDYIHAMRLFHENPKWIALSRTDSTSEELDARKSYLNSIKKSVYV.

Positions 82, 84, 88, and 127 each coordinate Fe(2+). Ni(2+)-binding residues include histidine 82, histidine 84, glutamate 88, and histidine 127. Serine 157 is subject to Phosphoserine.

Belongs to the acireductone dioxygenase (ARD) family. It depends on Fe(2+) as a cofactor. Requires Ni(2+) as cofactor.

It localises to the cytoplasm. The protein localises to the nucleus. It carries out the reaction 1,2-dihydroxy-5-(methylsulfanyl)pent-1-en-3-one + O2 = 4-methylsulfanyl-2-oxobutanoate + formate + 2 H(+). The catalysed reaction is 1,2-dihydroxy-5-(methylsulfanyl)pent-1-en-3-one + O2 = 3-(methylsulfanyl)propanoate + CO + formate + 2 H(+). The protein operates within amino-acid biosynthesis; L-methionine biosynthesis via salvage pathway; L-methionine from S-methyl-5-thio-alpha-D-ribose 1-phosphate: step 5/6. Functionally, catalyzes 2 different reactions between oxygen and the acireductone 1,2-dihydroxy-3-keto-5-methylthiopentene (DHK-MTPene) depending upon the metal bound in the active site. Fe-containing acireductone dioxygenase (Fe-ARD) produces formate and 2-keto-4-methylthiobutyrate (KMTB), the alpha-ketoacid precursor of methionine in the methionine recycle pathway. Ni-containing acireductone dioxygenase (Ni-ARD) produces methylthiopropionate, carbon monoxide and formate, and does not lie on the methionine recycle pathway. The protein is Acireductone dioxygenase (adi1) of Schizosaccharomyces pombe (strain 972 / ATCC 24843) (Fission yeast).